A 493-amino-acid polypeptide reads, in one-letter code: Aminotransferase swnA (493 aa).

This sequence belongs to the class-I pyridoxal-phosphate-dependent aminotransferase family. Pyridoxal 5'-phosphate is required as a cofactor.

The protein operates within mycotoxin biosynthesis. Its function is as follows. Aminotransferase; part of the gene cluster that mediates the biosynthesis of swainsonine (SW), a cytotoxic fungal alkaloid and a potential cancer therapy drug. Swainsonine production occurs via a multibranched pathway and is dispensable for fungal colonization of plants and infection of insect hosts. The first step of swainsonine biosynthesis is the production of the precursor pipecolic acid (PA) via conversion of L-lysine (Lys) to 1-piperideine-6-carboxylate (P6C) by the aminotransferase swnA, the latter being further reduced to PA by the reductase swnR. The PKS-NRPS hybrid synthetase swnK uptakes and condensates PA and malonyl-CoA with and without skipping of the ketoreductase (KR) domain in order to produce 3 intermediates, 1-oxoindolizidine, (1S)-1-hydroxyindolizin, and (1R)-1-hydroxyindolizine; with the transisomer (1S)-1-hydroxyindolizin being predominant. The terminal thioester reductase (TE) domain of swnK is involved in reduction of the thioester bond to release the intermediate aldehydes. The oxidoreductase swnN could contribute to the reduction of 1-oxoindolizidine to (1S)-1-hydroxyindolizin and (1R)-1-hydroxyindolizine, contributing to the major route of SW production. The dioxygenase swnH2 would be responsible for the oxidization of (1R)-1-hydroxyindolizine into (1R,2S)-1,2-dihydroxyindolizine and of (1S)-1-hydroxyindolizin to yield both (1R,2S)-1,2-dihydroxyindolizine and (1S,2S)-1,2-dihydroxyindolizine. The dioxygenase swnH1 then performs the conversion of the 1,2-dihydroxyindolizine epimers to SW. This chain is Aminotransferase swnA, found in Arthroderma benhamiae (strain ATCC MYA-4681 / CBS 112371) (Trichophyton mentagrophytes).